Here is a 262-residue protein sequence, read N- to C-terminus: Thiazole synthase (262 aa).

The active-site Schiff-base intermediate with DXP is K97. Residues G158, 185-186 (AG), and 207-208 (NT) contribute to the 1-deoxy-D-xylulose 5-phosphate site.

This sequence belongs to the ThiG family. As to quaternary structure, homotetramer. Forms heterodimers with either ThiH or ThiS.

The protein resides in the cytoplasm. It catalyses the reaction [ThiS sulfur-carrier protein]-C-terminal-Gly-aminoethanethioate + 2-iminoacetate + 1-deoxy-D-xylulose 5-phosphate = [ThiS sulfur-carrier protein]-C-terminal Gly-Gly + 2-[(2R,5Z)-2-carboxy-4-methylthiazol-5(2H)-ylidene]ethyl phosphate + 2 H2O + H(+). Its pathway is cofactor biosynthesis; thiamine diphosphate biosynthesis. Catalyzes the rearrangement of 1-deoxy-D-xylulose 5-phosphate (DXP) to produce the thiazole phosphate moiety of thiamine. Sulfur is provided by the thiocarboxylate moiety of the carrier protein ThiS. In vitro, sulfur can be provided by H(2)S. This chain is Thiazole synthase, found in Neisseria gonorrhoeae (strain ATCC 700825 / FA 1090).